The following is a 491-amino-acid chain: Probable polygalacturonase (491 aa).

A helical membrane pass occupies residues 15–35 (PIVSFYCFQVVSVLVAVVLLL). N-linked (GlcNAc...) asparagine glycosylation is found at Asn-165, Asn-175, and Asn-214. 4 PbH1 repeats span residues 230–256 (SRNILIQGITILAPVRSPNTDGINPDS), 257–278 (CTNTRIEDCYIVSGDDCVAVKS), 319–340 (IQDVRAEDIVAINSESGIRIKT), and 348–369 (VKDIYVRGMTMKTMKWAFWMTG). Asp-271 acts as the Proton donor in catalysis. Asn-399 and Asn-421 each carry an N-linked (GlcNAc...) asparagine glycan.

This sequence belongs to the glycosyl hydrolase 28 family.

The protein resides in the membrane. The enzyme catalyses (1,4-alpha-D-galacturonosyl)n+m + H2O = (1,4-alpha-D-galacturonosyl)n + (1,4-alpha-D-galacturonosyl)m.. In Vitis vinifera (Grape), this protein is Probable polygalacturonase.